The following is a 555-amino-acid chain: Urocanate hydratase (555 aa).

Residues Gly51–Gly52, Gln129, Gly175–Gly177, Glu195, Gln262–His266, Tyr272–Leu273, and Tyr321 contribute to the NAD(+) site. Residue Cys409 is part of the active site. Gly491 provides a ligand contact to NAD(+).

It belongs to the urocanase family. Requires NAD(+) as cofactor.

It is found in the cytoplasm. The enzyme catalyses 4-imidazolone-5-propanoate = trans-urocanate + H2O. Its pathway is amino-acid degradation; L-histidine degradation into L-glutamate; N-formimidoyl-L-glutamate from L-histidine: step 2/3. Catalyzes the conversion of urocanate to 4-imidazolone-5-propionate. The protein is Urocanate hydratase of Stenotrophomonas maltophilia (strain R551-3).